Here is a 664-residue protein sequence, read N- to C-terminus: Cyclic nucleotide-gated channel alpha-2 (664 aa).

The segment covering 1–10 (MMTEKSNGVK) has biased composition (polar residues). A disordered region spans residues 1-61 (MMTEKSNGVK…LQRLAEMDTP (61 aa)). Residues 1–146 (MMTEKSNGVK…PAGDWYYRWL (146 aa)) lie on the Cytoplasmic side of the membrane. A helical transmembrane segment spans residues 147 to 168 (FVIAMPVLYNWCLLVARACFSD). At 169 to 178 (LQRNYFVVWL) the chain is on the extracellular side. Residues 179–199 (VLDYFSDTVYIADLIIRLRTG) form a helical membrane-spanning segment. Topologically, residues 200–224 (FLEQGLLVKDPKKLRDNYIHTLQFK) are cytoplasmic. A helical membrane pass occupies residues 225–243 (LDVASIIPTDLIYFAVGIH). Residues 244-248 (SPEVR) are Extracellular-facing. Residues 249–267 (FNRLLHFARMFEFFDRTET) traverse the membrane as a helical segment. Topologically, residues 268–274 (RTSYPNI) are cytoplasmic. The ion conduction pathway stretch occupies residues 272–380 (PNIFRISNLV…GNVGSMISNM (109 aa)). Residues 275 to 298 (FRISNLVLYILVIIHWNACIYYAI) traverse the membrane as a helical segment. Residues 299–321 (SKSIGFGVDTWVYPNITDPEYGY) are Extracellular-facing. 2 consecutive transmembrane segments (helical) span residues 322 to 356 (LARE…LFVI) and 357 to 381 (FDFL…SNMN). Positions 339–342 (TIGE) are selectivity filter. A C-linker region spans residues 382 to 458 (ATRAEFQAKI…STLKKVRIFQ (77 aa)). Residues 382 to 664 (ATRAEFQAKI…INTPEPAVAE (283 aa)) lie on the Cytoplasmic side of the membrane. The segment at 462 to 582 (AGLLVELVLK…EERGREILMK (121 aa)) is cyclic nucleotide-binding domain. 4 residues coordinate 3',5'-cyclic GMP: G522, S525, R538, and T539. 3',5'-cyclic AMP contacts are provided by R538 and T539. The stretch at 599–653 (VQEKLEQLETNMETLYTRFARLLAEYTGAQQKLKQRITVLETKMKQNHEDDYLSD) forms a coiled coil.

This sequence belongs to the cyclic nucleotide-gated cation channel (TC 1.A.1.5) family. CNGA2 subfamily. As to quaternary structure, the olfactory cyclic nucleotide-gated channel is an heterotetramer composed of CNGA2, CNGA4 and CNGB1b subunits with 2:1:1 stoichiometry.

Its subcellular location is the cell projection. The protein localises to the cilium membrane. It carries out the reaction Ca(2+)(in) = Ca(2+)(out). The catalysed reaction is Na(+)(in) = Na(+)(out). The enzyme catalyses K(+)(in) = K(+)(out). It catalyses the reaction NH4(+)(in) = NH4(+)(out). It carries out the reaction Rb(+)(in) = Rb(+)(out). The catalysed reaction is Li(+)(in) = Li(+)(out). The enzyme catalyses Cs(+)(in) = Cs(+)(out). In terms of biological role, pore-forming subunit of the olfactory cyclic nucleotide-gated channel. Operates in the cilia of olfactory sensory neurons where chemical stimulation of the odorant is converted to an electrical signal. Mediates odorant-induced cAMP-dependent Ca(2+) influx triggering neuron depolarization. The rise of intracellular Ca(2+) levels potentiates the olfactory response by activating Ca(2+)-dependent Cl(-) channels, but it also serves as a negative feedback signal to desensitize the channel for rapid adaptation to odorants. Conducts cAMP- and cGMP-gated ion currents, with permeability for monovalent and divalent cations. The protein is Cyclic nucleotide-gated channel alpha-2 of Mus musculus (Mouse).